The primary structure comprises 226 residues: MDILIISLKSLGYSRTSRPLDSGPLVVHAVAGAGKSTALRKLLARHSTFTIHTLGVPDKISIRTRGIQKPGPIPKGNFAILDEYTLDATTREAYQALFADPYQAPELSLEPHFYLETSFRTPKKAAALIASCGFDFETNSQEEGHLEVTGIFKGPLLGKVIAIDSEAETTLSRHGVEFVKPCQVTGLEFPVVTIVSAAPIEEIGQSTLFYNAITRSKGLTYVRAGT.

Positions 1 to 138 (MDILIISLKS…IASCGFDFET (138 aa)) constitute a (+)RNA virus helicase ATP-binding domain. Residues 139–226 (NSQEEGHLEV…KGLTYVRAGT (88 aa)) form the (+)RNA virus helicase C-terminal domain.

The protein belongs to the Tymovirales TGBp1 protein family. Homodimer and homooligomer. Interacts with capsid protein. Interacts with host AGO1; this interaction targets the host protein for degradation, thereby suppressing the antiviral RNA silencing.

The protein localises to the host cytoplasm. Its function is as follows. Transports viral genome to neighboring plant cells directly through plasmosdesmata, without any budding. The movement protein allows efficient cell to cell propagation, by bypassing the host cell wall barrier. Increases plasmodesma size exclusion limit. Acts as a suppressor of RNA-mediated gene silencing, also known as post-transcriptional gene silencing (PTGS), a mechanism of plant viral defense that limits the accumulation of viral RNAs. The protein is Movement and silencing protein TGBp1 of Brassica campestris (Field mustard).